Reading from the N-terminus, the 165-residue chain is Phosphopantetheine adenylyltransferase (165 aa).

Position 10 (serine 10) interacts with substrate. ATP contacts are provided by residues serine 10–phenylalanine 11 and histidine 18. Substrate-binding residues include lysine 42, threonine 79, and arginine 93. Residues glycine 94–arginine 96, glutamate 104, and valine 129–threonine 135 each bind ATP.

Belongs to the bacterial CoaD family. As to quaternary structure, homohexamer. It depends on Mg(2+) as a cofactor.

It localises to the cytoplasm. It catalyses the reaction (R)-4'-phosphopantetheine + ATP + H(+) = 3'-dephospho-CoA + diphosphate. It functions in the pathway cofactor biosynthesis; coenzyme A biosynthesis; CoA from (R)-pantothenate: step 4/5. Reversibly transfers an adenylyl group from ATP to 4'-phosphopantetheine, yielding dephospho-CoA (dPCoA) and pyrophosphate. The protein is Phosphopantetheine adenylyltransferase of Rhodopseudomonas palustris (strain BisA53).